We begin with the raw amino-acid sequence, 164 residues long: Phosphopantetheine adenylyltransferase (164 aa).

Threonine 9 serves as a coordination point for substrate. Residues 9 to 10 (TF) and histidine 17 each bind ATP. 3 residues coordinate substrate: lysine 41, leucine 78, and arginine 92. ATP is bound by residues 93–95 (GLR), glutamate 103, and 128–134 (RQAIASK).

It belongs to the bacterial CoaD family. Homohexamer. Requires Mg(2+) as cofactor.

Its subcellular location is the cytoplasm. The enzyme catalyses (R)-4'-phosphopantetheine + ATP + H(+) = 3'-dephospho-CoA + diphosphate. Its pathway is cofactor biosynthesis; coenzyme A biosynthesis; CoA from (R)-pantothenate: step 4/5. In terms of biological role, reversibly transfers an adenylyl group from ATP to 4'-phosphopantetheine, yielding dephospho-CoA (dPCoA) and pyrophosphate. In Paracoccus denitrificans (strain Pd 1222), this protein is Phosphopantetheine adenylyltransferase.